We begin with the raw amino-acid sequence, 490 residues long: Probable cytosol aminopeptidase (490 aa).

Lys257 and Asp262 together coordinate Mn(2+). Residue Lys269 is part of the active site. Mn(2+) is bound by residues Asp281, Asp341, and Glu343. Residue Arg345 is part of the active site.

It belongs to the peptidase M17 family. Requires Mn(2+) as cofactor.

The protein resides in the cytoplasm. It catalyses the reaction Release of an N-terminal amino acid, Xaa-|-Yaa-, in which Xaa is preferably Leu, but may be other amino acids including Pro although not Arg or Lys, and Yaa may be Pro. Amino acid amides and methyl esters are also readily hydrolyzed, but rates on arylamides are exceedingly low.. The enzyme catalyses Release of an N-terminal amino acid, preferentially leucine, but not glutamic or aspartic acids.. Functionally, presumably involved in the processing and regular turnover of intracellular proteins. Catalyzes the removal of unsubstituted N-terminal amino acids from various peptides. This chain is Probable cytosol aminopeptidase, found in Prochlorococcus marinus (strain MIT 9312).